The chain runs to 82 residues: Myrmicitoxin(1)-Pm3a (82 aa).

The signal sequence occupies residues Met1 to Ala23. The propeptide occupies Thr24–Pro59. Leu81 is subject to Leucine amide.

This sequence belongs to the formicidae venom clade 1 family. In terms of tissue distribution, expressed by the venom gland.

It localises to the secreted. Toxin that causes a slowly developing temporary paralysis when intrathoracically injected into insects (blowflies). Does not cause spontaneous nocifensive behaviors by intraplantar injection in mice. In Pogonomyrmex maricopa (Maricopa harvester ant), this protein is Myrmicitoxin(1)-Pm3a.